We begin with the raw amino-acid sequence, 226 residues long: ATP-dependent dethiobiotin synthetase BioD (226 aa).

Position 12–17 (12–17 (GVGKTV)) interacts with ATP. Thr-16 serves as a coordination point for Mg(2+). Lys-37 is an active-site residue. Thr-41 is a binding site for substrate. ATP is bound by residues Asp-49, 108–111 (EGAG), 169–170 (GS), and 197–199 (PAG). Mg(2+)-binding residues include Asp-49 and Glu-108.

This sequence belongs to the dethiobiotin synthetase family. Homodimer. Mg(2+) serves as cofactor.

The protein resides in the cytoplasm. The catalysed reaction is (7R,8S)-7,8-diammoniononanoate + CO2 + ATP = (4R,5S)-dethiobiotin + ADP + phosphate + 3 H(+). It participates in cofactor biosynthesis; biotin biosynthesis; biotin from 7,8-diaminononanoate: step 1/2. Its function is as follows. Catalyzes a mechanistically unusual reaction, the ATP-dependent insertion of CO2 between the N7 and N8 nitrogen atoms of 7,8-diaminopelargonic acid (DAPA, also called 7,8-diammoniononanoate) to form a ureido ring. In Mycobacterium bovis (strain BCG / Pasteur 1173P2), this protein is ATP-dependent dethiobiotin synthetase BioD.